A 214-amino-acid chain; its full sequence is Putative ras-related protein Rab-5B (214 aa).

Residue 56-63 (GEMNTGKT) participates in GTP binding. Residues 77–85 (TDSTIGAAF) carry the Effector region motif. Residues 103 to 107 (DTAGQ) and 161 to 164 (NKVD) each bind GTP.

It belongs to the small GTPase superfamily. Rab family. Post-translationally, this sequence lacks the C-terminal cysteine motifs subject to isoprenylation in other Rab proteins.

This Dictyostelium discoideum (Social amoeba) protein is Putative ras-related protein Rab-5B (rab5B).